A 199-amino-acid polypeptide reads, in one-letter code: Recombination protein RecR (199 aa).

The C4-type zinc finger occupies 56-71 (CAICGNVAEHEQCRIC). The Toprim domain maps to 79–174 (TVLCVVEEPK…RVTRLASGLP (96 aa)).

Belongs to the RecR family.

In terms of biological role, may play a role in DNA repair. It seems to be involved in an RecBC-independent recombinational process of DNA repair. It may act with RecF and RecO. This Acidothermus cellulolyticus (strain ATCC 43068 / DSM 8971 / 11B) protein is Recombination protein RecR.